We begin with the raw amino-acid sequence, 359 residues long: Protein mab-21-like 2-A (359 aa).

It belongs to the mab-21 family.

The protein localises to the nucleus. It is found in the cytoplasm. Functionally, required for normal development of the eye. May promote dorsalization of the developing embryo by antagonizing the ventralizing factor bmp4. Functional antagonism of bmp4 may require interaction with smad1. Required for gastrulation and subsequent neural development. May function as a transcriptional repressor. This chain is Protein mab-21-like 2-A (mab21l2-a), found in Xenopus laevis (African clawed frog).